Reading from the N-terminus, the 317-residue chain is Methionyl-tRNA formyltransferase (317 aa).

112–115 serves as a coordination point for (6S)-5,6,7,8-tetrahydrofolate; that stretch reads SLLP.

Belongs to the Fmt family.

The catalysed reaction is L-methionyl-tRNA(fMet) + (6R)-10-formyltetrahydrofolate = N-formyl-L-methionyl-tRNA(fMet) + (6S)-5,6,7,8-tetrahydrofolate + H(+). Attaches a formyl group to the free amino group of methionyl-tRNA(fMet). The formyl group appears to play a dual role in the initiator identity of N-formylmethionyl-tRNA by promoting its recognition by IF2 and preventing the misappropriation of this tRNA by the elongation apparatus. The protein is Methionyl-tRNA formyltransferase of Histophilus somni (strain 2336) (Haemophilus somnus).